We begin with the raw amino-acid sequence, 200 residues long: Probable nicotinate-nucleotide adenylyltransferase (200 aa).

This sequence belongs to the NadD family.

It catalyses the reaction nicotinate beta-D-ribonucleotide + ATP + H(+) = deamido-NAD(+) + diphosphate. Its pathway is cofactor biosynthesis; NAD(+) biosynthesis; deamido-NAD(+) from nicotinate D-ribonucleotide: step 1/1. Functionally, catalyzes the reversible adenylation of nicotinate mononucleotide (NaMN) to nicotinic acid adenine dinucleotide (NaAD). The protein is Probable nicotinate-nucleotide adenylyltransferase of Clostridium botulinum (strain Eklund 17B / Type B).